Reading from the N-terminus, the 253-residue chain is Tryptophan synthase alpha chain (253 aa).

Active-site proton acceptor residues include Glu-47 and Asp-58.

It belongs to the TrpA family. As to quaternary structure, tetramer of two alpha and two beta chains.

The enzyme catalyses (1S,2R)-1-C-(indol-3-yl)glycerol 3-phosphate + L-serine = D-glyceraldehyde 3-phosphate + L-tryptophan + H2O. It participates in amino-acid biosynthesis; L-tryptophan biosynthesis; L-tryptophan from chorismate: step 5/5. Its function is as follows. The alpha subunit is responsible for the aldol cleavage of indoleglycerol phosphate to indole and glyceraldehyde 3-phosphate. The sequence is that of Tryptophan synthase alpha chain from Desulforapulum autotrophicum (strain ATCC 43914 / DSM 3382 / VKM B-1955 / HRM2) (Desulfobacterium autotrophicum).